A 172-amino-acid chain; its full sequence is Protein sym-1 (172 aa).

The next 5 helical transmembrane spans lie at 13 to 33 (PLLT…VAAQ), 52 to 72 (MVLY…RFLQ), 94 to 114 (GLFA…LEGT), 128 to 148 (LSTN…VVPL), and 152 to 172 (VLFV…LNGQ).

The protein belongs to the peroxisomal membrane protein PXMP2/4 family.

It localises to the mitochondrion inner membrane. Its function is as follows. May be involved in cellular response to stress. Required to maintain mitochondrial DNA (mtDNA) integrity and stability. The polypeptide is Protein sym-1 (sym-1) (Neurospora crassa (strain ATCC 24698 / 74-OR23-1A / CBS 708.71 / DSM 1257 / FGSC 987)).